A 543-amino-acid chain; its full sequence is Tetrahydroberberine oxidase (543 aa).

The N-terminal stretch at 1 to 26 (MIPNSSSSSILSLLVLLLFSTSSSWA) is a signal peptide. C37 and C97 form a disulfide bridge. N-linked (GlcNAc...) asparagine glycans are attached at residues N54, N74, N135, N142, N162, N295, N335, N440, and N482. Positions 75-250 (STQKPEFIIT…LSWKVKLVPV (176 aa)) constitute an FAD-binding PCMH-type domain. The 6-(S-cysteinyl)-8alpha-(pros-histidyl)-FAD (His-Cys) cross-link spans 112–175 (HDVEGLSYVS…NTLGFPAGFC (64 aa)).

The protein belongs to the oxygen-dependent FAD-linked oxidoreductase family. FAD serves as cofactor. In terms of processing, the FAD cofactor is bound via a bicovalent 6-S-cysteinyl, 8alpha-N1-histidyl FAD linkage.

It carries out the reaction (S)-canadine + 2 O2 + H(+) = berberine + 2 H2O2. In terms of biological role, catalyzes the oxidation of different tetrahydroprotoberberines, such as (S)-canadine, (S)-scoulerine and (S)-tetrahydropalmatine. This is Tetrahydroberberine oxidase from Argemone mexicana (Mexican prickly poppy).